Reading from the N-terminus, the 268-residue chain is Hemolysin C (268 aa).

CBS domains lie at 52–111 (MVPR…NFSL) and 114–171 (ILHK…IRDE).

This sequence belongs to the UPF0053 family.

Its function is as follows. Bacterial hemolysins are exotoxins that attack blood cell membranes and cause cell rupture by mechanisms not clearly defined. This chain is Hemolysin C (tlyC), found in Brachyspira hyodysenteriae (Treponema hyodysenteriae).